A 191-amino-acid chain; its full sequence is Large ribosomal subunit protein uL5 (191 aa).

Belongs to the universal ribosomal protein uL5 family. Part of the 50S ribosomal subunit; part of the 5S rRNA/L5/L18/L25 subcomplex. Contacts the 5S rRNA and the P site tRNA. Forms a bridge to the 30S subunit in the 70S ribosome.

Functionally, this is one of the proteins that bind and probably mediate the attachment of the 5S RNA into the large ribosomal subunit, where it forms part of the central protuberance. In the 70S ribosome it contacts protein S13 of the 30S subunit (bridge B1b), connecting the 2 subunits; this bridge is implicated in subunit movement. Contacts the P site tRNA; the 5S rRNA and some of its associated proteins might help stabilize positioning of ribosome-bound tRNAs. The polypeptide is Large ribosomal subunit protein uL5 (Thermobifida fusca (strain YX)).